We begin with the raw amino-acid sequence, 176 residues long: N-alpha-acetyltransferase 30 (176 aa).

An N-acetyltransferase domain is found at 3 to 159; it reads IVYKPLDIRN…DAFKLILPLT (157 aa).

This sequence belongs to the acetyltransferase family. MAK3 subfamily. Component of the N-terminal acetyltransferase C (NatC) complex, which is composed of MAK3, MAK10 and MAK31.

It localises to the cytoplasm. It is found in the nucleus. It carries out the reaction N-terminal L-methionyl-L-leucyl-[protein] + acetyl-CoA = N-terminal N(alpha)-acetyl-L-methionyl-L-leucyl-[protein] + CoA + H(+). It catalyses the reaction N-terminal L-methionyl-L-isoleucyl-[protein] + acetyl-CoA = N-terminal N(alpha)-acetyl-L-methionyl-L-isoleucyl-[protein] + CoA + H(+). The catalysed reaction is N-terminal L-methionyl-L-phenylalanyl-[protein] + acetyl-CoA = N-terminal N(alpha)-acetyl-L-methionyl-L-phenylalanyl-[protein] + CoA + H(+). The enzyme catalyses N-terminal L-methionyl-L-tryptophyl-[protein] + acetyl-CoA = N-terminal N(alpha)-acetyl-L-methionyl-L-tryptophyl-[protein] + CoA + H(+). It carries out the reaction N-terminal L-methionyl-L-tyrosyl-[protein] + acetyl-CoA = N-terminal N(alpha)-acetyl-L-methionyl-L-tyrosyl-[protein] + CoA + H(+). Its function is as follows. Catalytic component of the NatC N-terminal acetyltransferase, which catalyzes acetylation of the N-terminus Met of L-A virus GAG protein and possibly GRH1. This is N-alpha-acetyltransferase 30 (MAK3) from Saccharomyces cerevisiae (strain ATCC 204508 / S288c) (Baker's yeast).